The primary structure comprises 193 residues: Ion-translocating oxidoreductase complex subunit A (193 aa).

Transmembrane regions (helical) follow at residues 5–25, 39–59, 62–82, 102–122, 134–154, and 171–191; these read LLLFVGTVLVNNFVLVKFLGL, IGMGFATTFVMTIASISSWLM, FILVPLDLLYLRTLSFILVIA, LLGIFLPLITTNCAVLGVALL, AVYGFGAAVGFSLVMVLFAAI, and SIGLITAGLMSLAFMGFSGLV.

It belongs to the NqrDE/RnfAE family. As to quaternary structure, the complex is composed of six subunits: RnfA, RnfB, RnfC, RnfD, RnfE and RnfG.

It localises to the cell inner membrane. Its function is as follows. Part of a membrane-bound complex that couples electron transfer with translocation of ions across the membrane. The polypeptide is Ion-translocating oxidoreductase complex subunit A (Proteus mirabilis (strain HI4320)).